Here is a 175-residue protein sequence, read N- to C-terminus: ATP-dependent protease subunit HslV (175 aa).

The active site involves Thr2. Na(+) is bound by residues Ala156, Cys159, and Thr162.

The protein belongs to the peptidase T1B family. HslV subfamily. In terms of assembly, a double ring-shaped homohexamer of HslV is capped on each side by a ring-shaped HslU homohexamer. The assembly of the HslU/HslV complex is dependent on binding of ATP.

Its subcellular location is the cytoplasm. The catalysed reaction is ATP-dependent cleavage of peptide bonds with broad specificity.. Its activity is regulated as follows. Allosterically activated by HslU binding. In terms of biological role, protease subunit of a proteasome-like degradation complex believed to be a general protein degrading machinery. In Rhizobium johnstonii (strain DSM 114642 / LMG 32736 / 3841) (Rhizobium leguminosarum bv. viciae), this protein is ATP-dependent protease subunit HslV.